The primary structure comprises 292 residues: 4-amino-L-phenylalanine/4-methylamino-L-phenylalanine methyltransferase (292 aa).

128–132 (CAGPG) contacts S-adenosyl-L-methionine.

This sequence belongs to the protein N5-glutamine methyltransferase family.

The enzyme catalyses 4-amino-L-phenylalanine + S-adenosyl-L-methionine = 4-methylamino-L-phenylalanine + S-adenosyl-L-homocysteine + H(+). The catalysed reaction is 4-methylamino-L-phenylalanine + S-adenosyl-L-methionine = 4-dimethylamino-L-phenylalanine + S-adenosyl-L-homocysteine + H(+). It participates in antibiotic biosynthesis. In terms of biological role, involved in pristinamycin I biosynthesis. Catalyzes the SAM-dependent methylation of 4-amino-L-phenylalanine (PAPA) to 4-methylamino-L-phenylalanine (MMPAPA), and of MMPAPA to 4-dimethylamino-L-phenylalanine (DMPAPA). This Streptomyces pristinaespiralis protein is 4-amino-L-phenylalanine/4-methylamino-L-phenylalanine methyltransferase.